A 239-amino-acid polypeptide reads, in one-letter code: RNA polymerase sigma-35 factor (239 aa).

The propeptide occupies 1-27 (MMKLKFYLVYLWYKVLLKLGIKTDEIY). A Polymerase core binding motif is present at residues 86–99 (DLISIGTIGLIKAV). The H-T-H motif DNA-binding region spans 206-225 (QKDVADMLGISQSYISRLEK).

This sequence belongs to the sigma-70 factor family. Post-translationally, proteolytically cleaved in the N-terminus probably by a SpoIIGA homolog to yield the active peptide.

In terms of biological role, sigma factors are initiation factors that promote the attachment of RNA polymerase to specific initiation sites and are then released. This sigma factor directs the transcription of crystal protein genes, a sporulation-regulated event. The polypeptide is RNA polymerase sigma-35 factor (sigE) (Bacillus anthracis).